The following is a 303-amino-acid chain: MISTERLTHLKQLEAESIHIIREVVAEFSNPVMMYSVGKDSAVMLHLALKAFAPAKLPFPLLHVDTLWKFKEMIAFRDQRAKEEGFELLVHTNPEGVAMNISPFTHGSAVHTDIMKTQGLKQALNKYKFDAVFGGARRDEEKSRAKERIYSFRDKNHRWDPKNQRPELWNIYNGRVHKDESIRVFPISNWTELDIWQYIYLEQIPIVPLYFAAKRPVLEKDGVKIMVDDDRMPIGPDDVIKEEMVRFRTLGCYPLTGAVDSTATTLPEIIQEMLLTKTSERQGRVIDNDSAGSMEKKKIEGYF.

Belongs to the PAPS reductase family. CysD subfamily. Heterodimer composed of CysD, the smaller subunit, and CysN.

The catalysed reaction is sulfate + ATP + H(+) = adenosine 5'-phosphosulfate + diphosphate. It functions in the pathway sulfur metabolism; hydrogen sulfide biosynthesis; sulfite from sulfate: step 1/3. Functionally, with CysN forms the ATP sulfurylase (ATPS) that catalyzes the adenylation of sulfate producing adenosine 5'-phosphosulfate (APS) and diphosphate, the first enzymatic step in sulfur assimilation pathway. APS synthesis involves the formation of a high-energy phosphoric-sulfuric acid anhydride bond driven by GTP hydrolysis by CysN coupled to ATP hydrolysis by CysD. This chain is Sulfate adenylyltransferase subunit 2, found in Aliarcobacter butzleri (strain RM4018) (Arcobacter butzleri).